A 231-amino-acid chain; its full sequence is Class A basic helix-loop-helix protein 9 (231 aa).

One can recognise a bHLH domain in the interval 61–113; it reads ARRMAANVRERKRILDYNEAFNALRRALQHDLGGKRLSKIATLRRAIHRITAL. A disordered region spans residues 135–168; the sequence is QAAQGSSTGNSSFSVPRSAPSPIAPSLTRRDIAS. Polar residues predominate over residues 137–149; it reads AQGSSTGNSSFSV.

As to quaternary structure, heterodimer. Efficient DNA binding requires dimerization with another bHLH protein. Interacts with TCF3, TCF4, and TCF12.

Its subcellular location is the nucleus. Functionally, transcription factor, which play a role in limb development. Is an essential player in the regulatory network governing transcription of genes implicated in limb morphogenesis. This Mus musculus (Mouse) protein is Class A basic helix-loop-helix protein 9 (Bhlha9).